The primary structure comprises 364 residues: Probable tartrate dehydrogenase/decarboxylase TtuC (364 aa).

Residues D222, D246, and D250 each coordinate Mn(2+).

It belongs to the isocitrate and isopropylmalate dehydrogenases family. Mg(2+) is required as a cofactor. Mn(2+) serves as cofactor. Requires K(+) as cofactor.

Its subcellular location is the cytoplasm. The enzyme catalyses tartrate + NAD(+) = 2-hydroxy-3-oxosuccinate + NADH + H(+). It carries out the reaction (2R,3S)-tartrate + NAD(+) = 2-hydroxy-3-oxosuccinate + NADH + H(+). The catalysed reaction is (2R,3R)-tartrate + NAD(+) = 2-hydroxy-3-oxosuccinate + NADH + H(+). It catalyses the reaction (2R,3R)-tartrate + H(+) = (R)-glycerate + CO2. The enzyme catalyses (R)-malate + NAD(+) = pyruvate + CO2 + NADH. The protein operates within carbohydrate acid metabolism; tartrate degradation; 2-hydroxy-3-oxosuccinate from L-tartrate: step 1/1. Its pathway is carbohydrate acid metabolism; tartrate degradation; 2-hydroxy-3-oxosuccinate from meso-tartrate: step 1/1. It functions in the pathway carbohydrate acid metabolism; tartrate degradation; D-glycerate from L-tartrate: step 1/1. In terms of biological role, has multiple catalytic activities. Apart from catalyzing the oxidation of (+)-tartrate to oxaloglycolate, also converts meso-tartrate to D-glycerate and catalyzes the oxidative decarboxylation of D-malate to pyruvate. The polypeptide is Probable tartrate dehydrogenase/decarboxylase TtuC (ttuC) (Agrobacterium vitis (Rhizobium vitis)).